The chain runs to 124 residues: Small ribosomal subunit protein uS12 (124 aa).

The tract at residues 1 to 22 (MATINQLVRKPRKRKVAKSDVP) is disordered. Residue D89 is modified to 3-methylthioaspartic acid. Residues 101–124 (TLDTQGVQNRKQGRSKYGAKRPKS) are disordered. Basic residues predominate over residues 111–124 (KQGRSKYGAKRPKS).

It belongs to the universal ribosomal protein uS12 family. In terms of assembly, part of the 30S ribosomal subunit. Contacts proteins S8 and S17. May interact with IF1 in the 30S initiation complex.

Its function is as follows. With S4 and S5 plays an important role in translational accuracy. Functionally, interacts with and stabilizes bases of the 16S rRNA that are involved in tRNA selection in the A site and with the mRNA backbone. Located at the interface of the 30S and 50S subunits, it traverses the body of the 30S subunit contacting proteins on the other side and probably holding the rRNA structure together. The combined cluster of proteins S8, S12 and S17 appears to hold together the shoulder and platform of the 30S subunit. This is Small ribosomal subunit protein uS12 from Marinobacter nauticus (strain ATCC 700491 / DSM 11845 / VT8) (Marinobacter aquaeolei).